A 157-amino-acid polypeptide reads, in one-letter code: Ribosome maturation factor RimP (157 aa).

The protein belongs to the RimP family.

The protein resides in the cytoplasm. Its function is as follows. Required for maturation of 30S ribosomal subunits. This is Ribosome maturation factor RimP from Helicobacter hepaticus (strain ATCC 51449 / 3B1).